Consider the following 378-residue polypeptide: Glutamate 5-kinase (378 aa).

ATP is bound at residue Lys-20. Substrate contacts are provided by Ser-60, Asp-147, and Asn-159. ATP-binding positions include 179–180 and 221–227; these read TD and TGGMLTK. Residues 286–364 enclose the PUA domain; sequence RGRVVLDDGA…SQIARILGSM (79 aa).

The protein belongs to the glutamate 5-kinase family.

The protein localises to the cytoplasm. The enzyme catalyses L-glutamate + ATP = L-glutamyl 5-phosphate + ADP. Its pathway is amino-acid biosynthesis; L-proline biosynthesis; L-glutamate 5-semialdehyde from L-glutamate: step 1/2. In terms of biological role, catalyzes the transfer of a phosphate group to glutamate to form L-glutamate 5-phosphate. This is Glutamate 5-kinase from Bordetella parapertussis (strain 12822 / ATCC BAA-587 / NCTC 13253).